Here is a 206-residue protein sequence, read N- to C-terminus: Small ribosomal subunit protein uS4 (206 aa).

Residues G96–A158 form the S4 RNA-binding domain.

It belongs to the universal ribosomal protein uS4 family. In terms of assembly, part of the 30S ribosomal subunit. Contacts protein S5. The interaction surface between S4 and S5 is involved in control of translational fidelity.

In terms of biological role, one of the primary rRNA binding proteins, it binds directly to 16S rRNA where it nucleates assembly of the body of the 30S subunit. Functionally, with S5 and S12 plays an important role in translational accuracy. This Vibrio atlanticus (strain LGP32) (Vibrio splendidus (strain Mel32)) protein is Small ribosomal subunit protein uS4.